We begin with the raw amino-acid sequence, 168 residues long: INO80 complex subunit 3 (168 aa).

Over residues 115–129 (TNSTLSTPKSFHSPL) the composition is skewed to polar residues. The interval 115-168 (TNSTLSTPKSFHSPLQSRGISPSSAQSSAAVSSSRKQKRKRTSEGPSERRARKK) is disordered. Positions 130–148 (QSRGISPSSAQSSAAVSSS) are enriched in low complexity. Positions 156–168 (TSEGPSERRARKK) are enriched in basic and acidic residues.

As to quaternary structure, component of the INO80 chromatin remodeling complex.

It is found in the nucleus. Component of the INO80 complex which remodels chromatin by shifting nucleosomes and is involved in DNA repair. In Schizosaccharomyces pombe (strain 972 / ATCC 24843) (Fission yeast), this protein is INO80 complex subunit 3 (iec3).